A 136-amino-acid polypeptide reads, in one-letter code: Translation initiation factor 5A (136 aa).

Lys37 carries the post-translational modification Hypusine.

Belongs to the eIF-5A family.

It localises to the cytoplasm. Functions by promoting the formation of the first peptide bond. This chain is Translation initiation factor 5A, found in Thermococcus kodakarensis (strain ATCC BAA-918 / JCM 12380 / KOD1) (Pyrococcus kodakaraensis (strain KOD1)).